A 293-amino-acid chain; its full sequence is Extracellular metalloprotease PODANS_2_14170 (293 aa).

The N-terminal stretch at 1 to 18 is a signal peptide; sequence MRFSLALAAAGLAQTAFA. Asparagine 60 is a glycosylation site (N-linked (GlcNAc...) asparagine). Residue histidine 206 participates in Zn(2+) binding. Residue glutamate 207 is part of the active site. Histidine 210 serves as a coordination point for Zn(2+). A disulfide bond links cysteine 242 and cysteine 269.

It belongs to the peptidase M43B family.

The protein localises to the secreted. In terms of biological role, secreted metalloproteinase that allows assimilation of proteinaceous substrates. This is Extracellular metalloprotease PODANS_2_14170 from Podospora anserina (strain S / ATCC MYA-4624 / DSM 980 / FGSC 10383) (Pleurage anserina).